Here is a 267-residue protein sequence, read N- to C-terminus: Tryptophan synthase alpha chain (267 aa).

Residues Glu-49 and Asp-60 each act as proton acceptor in the active site.

The protein belongs to the TrpA family. In terms of assembly, tetramer of two alpha and two beta chains.

It catalyses the reaction (1S,2R)-1-C-(indol-3-yl)glycerol 3-phosphate + L-serine = D-glyceraldehyde 3-phosphate + L-tryptophan + H2O. The protein operates within amino-acid biosynthesis; L-tryptophan biosynthesis; L-tryptophan from chorismate: step 5/5. In terms of biological role, the alpha subunit is responsible for the aldol cleavage of indoleglycerol phosphate to indole and glyceraldehyde 3-phosphate. The chain is Tryptophan synthase alpha chain from Salinispora arenicola (strain CNS-205).